We begin with the raw amino-acid sequence, 381 residues long: Succinyl-diaminopimelate desuccinylase 1 (381 aa).

Histidine 70 contacts Zn(2+). The active site involves aspartate 72. Aspartate 103 contacts Zn(2+). The active-site Proton acceptor is the glutamate 136. Glutamate 137, glutamate 165, and histidine 354 together coordinate Zn(2+).

This sequence belongs to the peptidase M20A family. DapE subfamily. Homodimer. Requires Zn(2+) as cofactor. Co(2+) is required as a cofactor.

It carries out the reaction N-succinyl-(2S,6S)-2,6-diaminopimelate + H2O = (2S,6S)-2,6-diaminopimelate + succinate. Its pathway is amino-acid biosynthesis; L-lysine biosynthesis via DAP pathway; LL-2,6-diaminopimelate from (S)-tetrahydrodipicolinate (succinylase route): step 3/3. Catalyzes the hydrolysis of N-succinyl-L,L-diaminopimelic acid (SDAP), forming succinate and LL-2,6-diaminopimelate (DAP), an intermediate involved in the bacterial biosynthesis of lysine and meso-diaminopimelic acid, an essential component of bacterial cell walls. This Ruegeria sp. (strain TM1040) (Silicibacter sp.) protein is Succinyl-diaminopimelate desuccinylase 1.